A 300-amino-acid polypeptide reads, in one-letter code: Light-independent protochlorophyllide reductase iron-sulfur ATP-binding protein (300 aa).

ATP-binding positions include 10 to 15 (GIGKST) and Lys-39. Ser-14 provides a ligand contact to Mg(2+). Cys-95 and Cys-129 together coordinate [4Fe-4S] cluster. ATP is bound at residue 180–181 (NR).

The protein belongs to the NifH/BchL/ChlL family. As to quaternary structure, homodimer. Protochlorophyllide reductase is composed of three subunits; ChlL, ChlN and ChlB. It depends on [4Fe-4S] cluster as a cofactor.

The protein resides in the plastid. It localises to the chloroplast. It carries out the reaction chlorophyllide a + oxidized 2[4Fe-4S]-[ferredoxin] + 2 ADP + 2 phosphate = protochlorophyllide a + reduced 2[4Fe-4S]-[ferredoxin] + 2 ATP + 2 H2O. The protein operates within porphyrin-containing compound metabolism; chlorophyll biosynthesis (light-independent). Component of the dark-operative protochlorophyllide reductase (DPOR) that uses Mg-ATP and reduced ferredoxin to reduce ring D of protochlorophyllide (Pchlide) to form chlorophyllide a (Chlide). This reaction is light-independent. The L component serves as a unique electron donor to the NB-component of the complex, and binds Mg-ATP. This is Light-independent protochlorophyllide reductase iron-sulfur ATP-binding protein from Auxenochlorella protothecoides (Green microalga).